We begin with the raw amino-acid sequence, 395 residues long: Guanine nucleotide-binding protein subunit beta-5b (395 aa).

7 WD repeats span residues 103 to 142 (GHGNKVLCMDWCRDKRRIVSSSQDGKVIVWDAYTTNKEHA), 145 to 184 (MPCTWVMACAYAPSGCAVACGGLDNKCSVYPLSLDKNENL), 193 to 234 (MHTN…QSFH), 235 to 276 (GHSA…NVQS), 279 to 318 (THDSDINSVKYYPSGDAFASGSDDATCRLYDLRADREVAI), 320 to 362 (SKDS…RVAI), and 365 to 395 (GHENRVSTVRVSPDGTAFCSGSWDNTLRIWA).

Belongs to the WD repeat G protein beta family. As to quaternary structure, may interact with RGS9; this interaction stabilizes both proteins and increases RGS9 GTPase-activating protein (GAP) activity, hence accelerating the deactivation of D(2) dopamine receptor-mediated signaling.

The protein resides in the membrane. Its function is as follows. Enhances GTPase-activating protein (GAP) activity of regulator of G protein signaling (RGS) proteins, such as RGS7 and RGS9, hence involved in the termination of the signaling initiated by the G protein coupled receptors (GPCRs) by accelerating the GTP hydrolysis on the G-alpha subunits, thereby promoting their inactivation. Increases RGS7 GTPase-activating protein (GAP) activity, thereby regulating mood and cognition. Increases RGS9 GTPase-activating protein (GAP) activity, hence contributes to the deactivation of G protein signaling initiated by D(2) dopamine receptors. Along with gnb5a, plays an important role in neuronal signaling, including in the parasympathetic, but not sympathetic, control of heart rate. In Danio rerio (Zebrafish), this protein is Guanine nucleotide-binding protein subunit beta-5b.